Here is a 72-residue protein sequence, read N- to C-terminus: Kappa-conotoxin PVIIA (72 aa).

A signal peptide spans 1 to 22 (MKLTCVVIVVVLFLTACQLITA). Residues 23 to 45 (DDSRRTQKHRALRSTTKLSLSTR) constitute a propeptide that is removed on maturation. 3 disulfides stabilise this stretch: cysteine 46–cysteine 61, cysteine 53–cysteine 65, and cysteine 60–cysteine 71. 4-hydroxyproline is present on proline 49.

Belongs to the conotoxin O1 superfamily. This toxin is not amidated at the C-terminal Val residue. Expressed by the venom duct.

It is found in the secreted. Functionally, kappa-conotoxins bind and inhibit voltage-gated potassium channels (Kv). This toxin inhibits the drosophila Shaker channel (IC(50)=57-80 nM). In vivo, when tested in fish, this toxin induces hyperactivity, followed by continuous contraction and extension of major fins, without immobilization or death. Injection of this peptide together with the delta-conotoxin PVIA causes the sudden tetanus of prey (STOP) syndrome, which is a single, lethal 'fin-pop' in envenomed fish. When tested in mice, induces hyperactivity. This Conus purpurascens (Purple cone) protein is Kappa-conotoxin PVIIA.